Consider the following 150-residue polypeptide: 3-dehydroquinate dehydratase (150 aa).

The active-site Proton acceptor is Tyr26. Asn75, His81, and Asp88 together coordinate substrate. His101 serves as the catalytic Proton donor. Residues 102–103 (LS) and Arg112 each bind substrate.

Belongs to the type-II 3-dehydroquinase family. Homododecamer.

The catalysed reaction is 3-dehydroquinate = 3-dehydroshikimate + H2O. It functions in the pathway metabolic intermediate biosynthesis; chorismate biosynthesis; chorismate from D-erythrose 4-phosphate and phosphoenolpyruvate: step 3/7. In terms of biological role, catalyzes a trans-dehydration via an enolate intermediate. The sequence is that of 3-dehydroquinate dehydratase from Shewanella loihica (strain ATCC BAA-1088 / PV-4).